Reading from the N-terminus, the 322-residue chain is Putative HTH-type transcriptional regulatory protein rrnAC2519 (322 aa).

Residues 132–189 form the HTH cro/C1-type domain; sequence LADVREDRDWSLGRLAKELGVSRRTVSKYEDGMDASVEVAAELEDLFDAPLTSPVSVL. The segment at residues 143 to 162 is a DNA-binding region (H-T-H motif); the sequence is LGRLAKELGVSRRTVSKYED.

In Haloarcula marismortui (strain ATCC 43049 / DSM 3752 / JCM 8966 / VKM B-1809) (Halobacterium marismortui), this protein is Putative HTH-type transcriptional regulatory protein rrnAC2519.